Here is a 202-residue protein sequence, read N- to C-terminus: 3-isopropylmalate dehydratase small subunit (202 aa).

Belongs to the LeuD family. LeuD type 1 subfamily. Heterodimer of LeuC and LeuD.

The catalysed reaction is (2R,3S)-3-isopropylmalate = (2S)-2-isopropylmalate. The protein operates within amino-acid biosynthesis; L-leucine biosynthesis; L-leucine from 3-methyl-2-oxobutanoate: step 2/4. In terms of biological role, catalyzes the isomerization between 2-isopropylmalate and 3-isopropylmalate, via the formation of 2-isopropylmaleate. This Rhizobium johnstonii (strain DSM 114642 / LMG 32736 / 3841) (Rhizobium leguminosarum bv. viciae) protein is 3-isopropylmalate dehydratase small subunit.